The sequence spans 191 residues: Gene BABR protein 1 (191 aa).

This is Gene BABR protein 1 from Babesia bovis.